We begin with the raw amino-acid sequence, 95 residues long: Aspartyl/glutamyl-tRNA(Asn/Gln) amidotransferase subunit C (95 aa).

It belongs to the GatC family. In terms of assembly, heterotrimer of A, B and C subunits.

The catalysed reaction is L-glutamyl-tRNA(Gln) + L-glutamine + ATP + H2O = L-glutaminyl-tRNA(Gln) + L-glutamate + ADP + phosphate + H(+). It carries out the reaction L-aspartyl-tRNA(Asn) + L-glutamine + ATP + H2O = L-asparaginyl-tRNA(Asn) + L-glutamate + ADP + phosphate + 2 H(+). In terms of biological role, allows the formation of correctly charged Asn-tRNA(Asn) or Gln-tRNA(Gln) through the transamidation of misacylated Asp-tRNA(Asn) or Glu-tRNA(Gln) in organisms which lack either or both of asparaginyl-tRNA or glutaminyl-tRNA synthetases. The reaction takes place in the presence of glutamine and ATP through an activated phospho-Asp-tRNA(Asn) or phospho-Glu-tRNA(Gln). This chain is Aspartyl/glutamyl-tRNA(Asn/Gln) amidotransferase subunit C, found in Geobacter metallireducens (strain ATCC 53774 / DSM 7210 / GS-15).